The sequence spans 1149 residues: ATP-dependent helicase/deoxyribonuclease subunit B (1149 aa).

Residues 1-276 enclose the UvrD-like helicase ATP-binding domain; sequence MAIRYIFGRA…INLDIEERKV (276 aa). 8–15 lines the ATP pocket; sequence GRAGRGKS. In terms of domain architecture, UvrD-like helicase C-terminal spans 273 to 586; the sequence is ERKVLPKEKE…LVGSIERSKS (314 aa). The [4Fe-4S] cluster site is built by Cys786, Cys1105, Cys1108, and Cys1114.

Belongs to the helicase family. AddB/RexB type 1 subfamily. Heterodimer of AddA and AddB. Requires Mg(2+) as cofactor. [4Fe-4S] cluster is required as a cofactor.

Functionally, the heterodimer acts as both an ATP-dependent DNA helicase and an ATP-dependent, dual-direction single-stranded exonuclease. Recognizes the chi site generating a DNA molecule suitable for the initiation of homologous recombination. The AddB subunit has 5' -&gt; 3' nuclease activity but not helicase activity. The protein is ATP-dependent helicase/deoxyribonuclease subunit B of Alkaliphilus metalliredigens (strain QYMF).